Here is a 334-residue protein sequence, read N- to C-terminus: Ornithine carbamoyltransferase (334 aa).

Carbamoyl phosphate is bound by residues 56 to 59, glutamine 83, arginine 107, and 134 to 137; these read STRT and HPTQ. L-ornithine-binding positions include asparagine 168, aspartate 232, and 236–237; that span reads SM. Residues 274–275 and arginine 320 contribute to the carbamoyl phosphate site; that span reads CL.

This sequence belongs to the aspartate/ornithine carbamoyltransferase superfamily. OTCase family.

Its subcellular location is the cytoplasm. It catalyses the reaction carbamoyl phosphate + L-ornithine = L-citrulline + phosphate + H(+). It participates in amino-acid biosynthesis; L-arginine biosynthesis; L-arginine from L-ornithine and carbamoyl phosphate: step 1/3. In terms of biological role, reversibly catalyzes the transfer of the carbamoyl group from carbamoyl phosphate (CP) to the N(epsilon) atom of ornithine (ORN) to produce L-citrulline. This Shigella sonnei (strain Ss046) protein is Ornithine carbamoyltransferase.